Reading from the N-terminus, the 209-residue chain is ATP-dependent Clp protease proteolytic subunit (209 aa).

The Nucleophile role is filled by Ser101. Residue His126 is part of the active site.

Belongs to the peptidase S14 family. Component of the chloroplastic Clp protease core complex.

It is found in the plastid. The protein localises to the chloroplast stroma. The enzyme catalyses Hydrolysis of proteins to small peptides in the presence of ATP and magnesium. alpha-casein is the usual test substrate. In the absence of ATP, only oligopeptides shorter than five residues are hydrolyzed (such as succinyl-Leu-Tyr-|-NHMec, and Leu-Tyr-Leu-|-Tyr-Trp, in which cleavage of the -Tyr-|-Leu- and -Tyr-|-Trp bonds also occurs).. In terms of biological role, cleaves peptides in various proteins in a process that requires ATP hydrolysis. Has a chymotrypsin-like activity. Plays a major role in the degradation of misfolded proteins. In Huperzia lucidula (Shining clubmoss), this protein is ATP-dependent Clp protease proteolytic subunit.